Consider the following 363-residue polypeptide: Fructose-bisphosphate aldolase 1 (363 aa).

Position 34 (Asp-34) interacts with dihydroxyacetone phosphate. Positions 36 and 39 each coordinate D-glyceraldehyde 3-phosphate. Residue Arg-43 participates in beta-D-fructose 1,6-bisphosphate binding. A D-glyceraldehyde 3-phosphate-binding site is contributed by Lys-107. Lys-146 lines the dihydroxyacetone phosphate pocket. Glu-189 is a binding site for D-glyceraldehyde 3-phosphate. The active-site Proton acceptor is the Glu-189. The dihydroxyacetone phosphate site is built by Lys-231, Ser-273, and Gly-274. Lys-231 (schiff-base intermediate with dihydroxyacetone phosphate) is an active-site residue. Beta-D-fructose 1,6-bisphosphate is bound by residues 273–275 (SGG) and Ser-301. The dihydroxyacetone phosphate site is built by Gly-303 and Arg-304. Residue Arg-304 coordinates beta-D-fructose 1,6-bisphosphate.

Belongs to the class I fructose-bisphosphate aldolase family. As to quaternary structure, homotetramer. Component of a complex, at least composed of ald-1, microneme protein MIC2 and ACT1. Interacts with microneme protein MIC2 (via cytoplasmic tail). Interacts with ACT1 (F-actin).

It localises to the cytoplasm. It catalyses the reaction beta-D-fructose 1,6-bisphosphate = D-glyceraldehyde 3-phosphate + dihydroxyacetone phosphate. Its pathway is carbohydrate degradation; glycolysis; D-glyceraldehyde 3-phosphate and glycerone phosphate from D-glucose: step 4/4. In terms of biological role, plays a key role in glycolysis by catalyzing the cleavage of fructose 1,6-bisphosphate into dihydroxyacetone phosphate and glyceraldehyde 3-phosphate. Forms a bridge between cell surface adhesins and the actin cytoskeleton. Required for parasite invasion of host cells. The polypeptide is Fructose-bisphosphate aldolase 1 (Toxoplasma gondii).